The primary structure comprises 201 residues: MSRYTGPSWKVSRRLGFSLSGTGKELSRRPYAPGQHGQDRRGSLSEYGLQLREKQKLRMTYGLTERQFSNLFKRAGKIREGKHGDNFMILLERRLDNVVYRLGLASTRRQARQLVNHGHITVDGKRVDIPSYEVEPGQVISLRERSKDLQIVKEALEAVVGRVPFVNFDENKMEGTLVRLPDREELDANIDEALVVEFYNR.

The tract at residues 20–46 (SGTGKELSRRPYAPGQHGQDRRGSLSE) is disordered. The region spanning 93–156 (RRLDNVVYRL…KDLQIVKEAL (64 aa)) is the S4 RNA-binding domain.

This sequence belongs to the universal ribosomal protein uS4 family. In terms of assembly, part of the 30S ribosomal subunit. Contacts protein S5. The interaction surface between S4 and S5 is involved in control of translational fidelity.

In terms of biological role, one of the primary rRNA binding proteins, it binds directly to 16S rRNA where it nucleates assembly of the body of the 30S subunit. Functionally, with S5 and S12 plays an important role in translational accuracy. This Ligilactobacillus salivarius (strain UCC118) (Lactobacillus salivarius) protein is Small ribosomal subunit protein uS4.